Here is a 2527-residue protein sequence, read N- to C-terminus: Neurogenic locus notch homolog protein 1 (2527 aa).

A signal peptide spans 1-36 (MGRSDSRAGALLEGGCEQNIDPRRAAHCHHPRLATS). Residues 37–1741 (SLRCSQPSGT…VEPPLPSQLH (1705 aa)) are Extracellular-facing. 33 disulfides stabilise this stretch: cysteine 40–cysteine 53, cysteine 47–cysteine 62, cysteine 64–cysteine 73, cysteine 79–cysteine 90, cysteine 84–cysteine 103, cysteine 105–cysteine 114, cysteine 122–cysteine 133, cysteine 127–cysteine 143, cysteine 145–cysteine 154, cysteine 160–cysteine 171, cysteine 165–cysteine 180, cysteine 182–cysteine 191, cysteine 198–cysteine 211, cysteine 205–cysteine 220, cysteine 222–cysteine 231, cysteine 238–cysteine 249, cysteine 243–cysteine 259, cysteine 261–cysteine 270, cysteine 277–cysteine 288, cysteine 282–cysteine 297, cysteine 299–cysteine 308, cysteine 315–cysteine 328, cysteine 322–cysteine 337, cysteine 339–cysteine 348, cysteine 355–cysteine 366, cysteine 360–cysteine 375, cysteine 377–cysteine 386, cysteine 392–cysteine 403, cysteine 397–cysteine 414, cysteine 416–cysteine 425, cysteine 432–cysteine 445, cysteine 439–cysteine 454, and cysteine 456–cysteine 465. The N-linked (GlcNAc...) asparagine glycan is linked to asparagine 57. EGF-like domains are found at residues 75 to 115 (DPNP…PLCL), 118 to 155 (LDNACLANPCRNGGTCDLLTLTEYKCRCPPGWSGKSCQ), and 156 to 192 (QADPCASNPCANGGQCLPFESSYICGCPPGFHGPTCR). O-linked (Glc...) serine glycosylation is present at serine 81. Threonine 89 is a glycosylation site (O-linked (Fuc...) threonine). A glycan (O-linked (Fuc...) threonine) is linked at threonine 132. The O-linked (Glc...) serine glycan is linked to serine 162. Positions 194–232 (DVNECSQNPGLCRHGGTCHNEIGSYRCVCRATHTGPHCE) constitute an EGF-like 4; calcium-binding domain. Threonine 210 carries an O-linked (Fuc...) threonine glycan. The region spanning 234-271 (PYVPCSPSPCQNGGTCRPTGDTTHECACLPGFAGQNCE) is the EGF-like 5 domain. The O-linked (Fuc...) threonine; alternate glycan is linked to threonine 248. Threonine 248 carries O-linked (GalNAc...) threonine; alternate glycosylation. An EGF-like 6; calcium-binding domain is found at 273–309 (NVDDCPGNNCKNGGACVDGVNTYNCRCPPEWTGQYCT). Residues 311–349 (DVDECQLMPNACQNGGTCHNTHGGYNCVCVNGWTGEDCS) enclose the EGF-like 7; calcium-binding domain. Threonine 327 is a glycosylation site (O-linked (Fuc...) threonine). In terms of domain architecture, EGF-like 8; calcium-binding spans 351-387 (NIDDCASAACFQGATCHDRVASFYCECPHGRTGLLCH). O-linked (Glc...) serine glycosylation occurs at serine 357. Threonine 365 carries an O-linked (Fuc...) threonine glycan. The 39-residue stretch at 388–426 (LNDACISNPCNEGSNCDTNPVNGKAICTCPSGYTGPACS) folds into the EGF-like 9 domain. O-linked (Glc...) serine glycosylation occurs at serine 394. Residues 428-466 (DVDECALGANPCEHAGKCLNTLGSFECQCLQGYTGPRCE) form the EGF-like 10; calcium-binding domain. Positions 436–437 (AN) are interaction with DLL4. Threonine 448 and serine 451 together coordinate Ca(2+). Serine 451 is a glycosylation site (O-linked (Glc...) serine). The segment at 464–468 (RCEID) is interaction with DLL4. Aspartate 468, valine 469, and glutamate 471 together coordinate Ca(2+). The region spanning 468 to 504 (DVNECISNPCQNDATCLDQIGEFQCICMPGYEGVYCE) is the EGF-like 11; calcium-binding domain. 3 disulfide bridges follow: cysteine 472/cysteine 483, cysteine 477/cysteine 492, and cysteine 494/cysteine 503. An O-linked (Glc...) serine glycan is attached at serine 474. Threonine 482 carries O-linked (Fuc...) threonine glycosylation. Ca(2+) contacts are provided by aspartate 485 and glutamine 486. Residues asparagine 506, threonine 507, and glutamate 509 each contribute to the Ca(2+) site. The EGF-like 12; calcium-binding domain occupies 506–542 (NTDECASSPCLHNGHCMDKINEFLCQCPKGFSGHLCQ). 28 cysteine pairs are disulfide-bonded: cysteine 510/cysteine 521, cysteine 515/cysteine 530, cysteine 532/cysteine 541, cysteine 548/cysteine 559, cysteine 553/cysteine 568, cysteine 570/cysteine 579, cysteine 586/cysteine 596, cysteine 591/cysteine 605, cysteine 607/cysteine 616, cysteine 623/cysteine 634, cysteine 628/cysteine 643, cysteine 645/cysteine 654, cysteine 661/cysteine 671, cysteine 666/cysteine 680, cysteine 682/cysteine 691, cysteine 698/cysteine 709, cysteine 703/cysteine 718, cysteine 720/cysteine 729, cysteine 736/cysteine 746, cysteine 741/cysteine 755, cysteine 757/cysteine 766, cysteine 773/cysteine 784, cysteine 778/cysteine 793, cysteine 795/cysteine 804, cysteine 811/cysteine 822, cysteine 816/cysteine 831, cysteine 833/cysteine 842, and cysteine 849/cysteine 860. O-linked (Glc...) serine glycosylation occurs at serine 512. Ca(2+) is bound by residues aspartate 523 and lysine 524. The EGF-like 13; calcium-binding domain occupies 544-580 (DVDECASTPCKNGAKCLDGPNTYTCVCTEGYTGTHCE). A glycan (O-linked (Glc...) serine) is linked at serine 550. The EGF-like 14; calcium-binding domain occupies 582–617 (DIDECDPDPCHYGFCKDGVATFTCLCQPGYTGHHCE). In terms of domain architecture, EGF-like 15; calcium-binding spans 619-655 (NINECHSQPCRHGGTCQDRDNSYLCLCLKGTTGPNCE). Serine 625 is a glycosylation site (O-linked (Glc...) serine). Residue threonine 633 is glycosylated (O-linked (Fuc...) threonine). The 36-residue stretch at 657–692 (NLDDCASNPCDSGTCLDKIDGYECACEPGYTGSMCN) folds into the EGF-like 16; calcium-binding domain. The O-linked (Glc...) serine glycan is linked to serine 663. In terms of domain architecture, EGF-like 17; calcium-binding spans 694 to 730 (NIDECAGSPCHNGGTCEDGIAGFTCRCPEGYHDPTCL). Threonine 708 carries O-linked (Fuc...) threonine glycosylation. Residues 732–767 (EVNECNSNPCIHGACRDGLNGYKCDCAPGWSGTNCD) form the EGF-like 18; calcium-binding domain. O-linked (Glc...) serine glycosylation occurs at serine 738. The 37-residue stretch at 769–805 (NNNECESNPCVNGGTCKDMTSGYVCTCREGFSGPNCQ) folds into the EGF-like 19 domain. Residue serine 775 is glycosylated (O-linked (Glc...) serine). Threonine 783 carries an O-linked (Fuc...) threonine glycan. A glycan (O-linked (GlcNAc) serine) is linked at serine 800. The EGF-like 20; calcium-binding domain occupies 807-843 (NINECASNPCLNQGTCIDDVAGYKCNCPLPYTGATCE). Residue serine 813 is glycosylated (O-linked (Glc...) serine). Residue threonine 821 is glycosylated (O-linked (Fuc...) threonine). Residues 845–883 (VLAPCATSPCKNSGVCKESEDYESFSCVCPTGWQGQTCE) enclose the EGF-like 21 domain. The EGF-like 22; calcium-binding domain occupies 885-921 (DINECVKSPCRHGASCQNTNGSYRCLCQAGYTGRNCE). Asparagine 904 carries an N-linked (GlcNAc...) asparagine glycan. A glycan (O-linked (GlcNAc) threonine) is linked at threonine 916. Residues 923-959 (DIDDCRPNPCHNGGSCTDGINMAFCDCLPGFQGAFCE) enclose the EGF-like 23 domain. An O-linked (Fuc) serine glycan is attached at serine 937. Residues 961-997 (DINECASNPCRNGANCTDCVDSYTCTCPAGFNGIHCE) enclose the EGF-like 24; calcium-binding domain. O-linked (Glc...) serine glycosylation is present at serine 967. N-linked (GlcNAc...) asparagine glycosylation is present at asparagine 975. EGF-like domains are found at residues 999–1035 (NTPDCTESSCFNGGTCVDGINSFTCLCPPGFTGSYCQ), 1037–1073 (DVNECDSRPCLHGGTCQDSYGTYKCTCPQGYTGLNCQ), 1075–1111 (LVHWCDSAPCKNGGKCWQTNTQYHCECRSGWTGFNCD), 1113–1159 (LSVS…SYCE), and 1161–1197 (EVDECSPNPCQNGATCTDYLGGFSCKCVAGYHGSNCS). Threonine 1013 carries O-linked (Fuc...) threonine glycosylation. O-linked (Glc...) serine glycosylation occurs at serine 1043. Threonine 1051 carries an O-linked (Fuc...) threonine glycan. Serine 1081 carries O-linked (Glc...) serine glycosylation. A disulfide bridge connects residues cysteine 1117 and cysteine 1138. The O-linked (Fuc...) threonine glycan is linked to threonine 1175. Asparagine 1195 carries an N-linked (GlcNAc...) asparagine glycan. An EGF-like 30; calcium-binding domain is found at 1199–1235 (EINECLSQPCQNGGTCIDLTNTYKCSCPRGTQGVHCE). The O-linked (Glc...) serine glycan is linked to serine 1205. Threonine 1213 carries O-linked (Fuc...) threonine glycosylation. The 45-residue stretch at 1237–1281 (NVDDCHPHLDPASRSPKCFNNGTCVDQVGGYSCTCPPGFVGERCE) folds into the EGF-like 31; calcium-binding domain. An N-linked (GlcNAc...) asparagine glycan is attached at asparagine 1257. 4 EGF-like domains span residues 1283 to 1321 (DINECLSNPCDPRGTQDCVQRVNDFHCECRAGHTGRRCE), 1323 to 1362 (VINGCRGKPCKNGGVCAVASNTARGFICRCPAGFEGATCE), 1364 to 1400 (DARTCGSLRCLNGGTCISGPRSPTCLCLGSFTGPECQ), and 1403 to 1442 (ASSPCVGSNPCYNQGTCEPTSESPFYRCLCPAKFNGLLCH). An O-linked (Glc...) serine glycan is attached at serine 1289. An O-linked (Fuc...) threonine glycan is attached at threonine 1378. An O-linked (GlcNAc...) threonine glycan is attached at threonine 1395. Threonine 1418 carries an O-linked (Fuc...) threonine; alternate glycan. O-linked (GalNAc...) threonine; alternate glycosylation occurs at threonine 1418. 3 LNR repeats span residues 1465–1505 (CELP…PWKN), 1506–1547 (CTQS…CNPL), and 1548–1587 (YDQYCKDHFSDGHCDQGCNSAECDWDGLDCADHVPERLAA). The Ca(2+) site is built by aspartate 1473, asparagine 1476, aspartate 1491, and aspartate 1494. An N-linked (GlcNAc...) asparagine glycan is attached at asparagine 1505. N-linked (GlcNAc...) asparagine glycosylation is present at asparagine 1603. A glycan (O-linked (GalNAc...) threonine) is linked at threonine 1731. The segment at 1734–1766 (PPLPSQLHLMYLAAAAFVLLFFVGCGVLLSRKR) is interaction with PSEN1. Residues 1742–1762 (LMYLAAAAFVLLFFVGCGVLL) traverse the membrane as a helical segment. Residues 1763–2527 (SRKRRRQHGQ…QITHIPEAFK (765 aa)) are Cytoplasmic-facing. Lysine 1765 is covalently cross-linked (Glycyl lysine isopeptide (Lys-Gly) (interchain with G-Cter in ubiquitin)). The tract at residues 1786–1814 (KKKRREPLGEDSVGLKPLKNASDGALMDD) is disordered. Threonine 1867 is subject to Phosphothreonine. 5 ANK repeats span residues 1933 to 1962 (TGETALHLAARYSRSDAAKRLLEASADANI), 1966 to 1996 (MGRTPLHAAVSADAQGVFQILLRNRATDLDA), 2000 to 2029 (DGTTPLILAARLAVEGMLEDLINSHADVNA), 2033 to 2062 (LGKSALHWAAAVNNVDAAVVLLKNGANKDM), and 2066 to 2095 (KEETPLFLAAREGSYETAKVLLDHFANRDI). An HIF1AN-binding region spans residues 1953–1961 (LLEASADAN). The residue at position 1961 (asparagine 1961) is a (3S)-3-hydroxyasparagine; by HIF1AN; partial. The HIF1AN-binding stretch occupies residues 2020 to 2028 (LINSHADVN). (3S)-3-hydroxyasparagine; by HIF1AN is present on asparagine 2028. 3 disordered regions span residues 2157–2201 (SATQ…DSSS), 2378–2424 (QPQN…SLPV), and 2436–2527 (PTSL…EAFK). Positions 2378–2391 (QPQNLQPPSQPHLS) are enriched in low complexity. Positions 2436 to 2474 (PTSLPSSMVPPMTTTQFLTPPSQHSYSSSPVDNTPSHQL) are enriched in polar residues. Residues 2484–2499 (PSPESPDQWSSSSPHS) are compositionally biased toward low complexity. Residues 2500–2520 (NISDWSEGISSPPTSMPSQIT) are compositionally biased toward polar residues.

This sequence belongs to the NOTCH family. Heterodimer of a C-terminal fragment N(TM) and an N-terminal fragment N(EC) which are probably linked by disulfide bonds. Interacts with DNER, DTX1, DTX2 and RBPJ/RBPSUH. Also interacts with MAML1, MAML2 and MAML3 which act as transcriptional coactivators for NOTCH1. Notch 1 intracellular domain interacts with SNW1; the interaction involves multimerized NOTCH1 NICD and is implicated in a formation of an intermediate preactivation complex which associates with DNA-bound CBF-1/RBPJ. The activated membrane-bound form interacts with AAK1 which promotes NOTCH1 stabilization. Forms a trimeric complex with FBXW7 and SGK1. Interacts with HIF1AN. HIF1AN negatively regulates the function of notch intracellular domain (NICD), accelerating myogenic differentiation. Interacts (via NICD) with SNAI1 (via zinc fingers); the interaction induces SNAI1 degradation via MDM2-mediated ubiquitination and inhibits SNAI1-induced cell invasion. Interacts (via NICD) with MDM2A. Interacts (via NICD) with BCL6; the interaction decreases MAML1 recruitment by NOTCH1 NICD on target genes DNA and inhibits NOTCH1 transactivation activity. Interacts with THBS4. Interacts (via the EGF-like repeat region) with CCN3 (via CTCK domain). Interacts (via EGF-like domains) with DLL4 (via N-terminal DSL and MNNL domains). Interacts with ZMIZ1. Interacts (via NICD domain) with MEGF10 (via the cytoplasmic domain). Interacts with DLL1 and JAG1. Interacts (via NICD domain) with PRAG1. Forms a complex with PRAG1, N1ICD and MAML1, in a MAML1-dependent manner. Interacts (via transmembrane region) with PSEN1; the interaction is direct. Interacts with ZFP64. Post-translationally, synthesized in the endoplasmic reticulum as an inactive form which is proteolytically cleaved by a furin-like convertase in the trans-Golgi network before it reaches the plasma membrane to yield an active, ligand-accessible form. Cleavage results in a C-terminal fragment N(TM) and a N-terminal fragment N(EC). Following ligand binding, it is cleaved by ADAM17 to yield a membrane-associated intermediate fragment called notch extracellular truncation (NEXT). Following endocytosis, this fragment is then cleaved by one of the catalytic subunits of gamma-secretase (PSEN1 or PSEN2) to release a Notch-derived peptide containing the intracellular domain (NICD) from the membrane. In terms of processing, phosphorylated. O-linked glycosylation by GALNT11 is involved in determination of left/right symmetry: glycosylation promotes activation of NOTCH1, possibly by promoting cleavage by ADAM17, modulating the balance between motile and immotile (sensory) cilia at the left-right organiser (LRO). O-glycosylated on the EGF-like domains. O-glucosylated at Ser-451 by KDELC1 and KDELC2. Contains both O-linked fucose and O-linked glucose in the EGF-like domains 11, 12 and 13, which are interacting with the residues on DLL4. MFNG-, RFNG- and LFNG-mediated modification of O-fucose residues at specific EGF-like domains results in inhibition of its activation by JAG1 and enhancement of its activation by DLL1 via an increased binding to DLL1. Post-translationally, ubiquitinated. Undergoes 'Lys-29'-linked polyubiquitination by ITCH; promotes the lysosomal degradation of non-activated internalized NOTCH1. Deubiquitination by USP12 is required for transport of internalized non-activated receptor from late endosomes to lysosomes for degradation. Monoubiquitination at Lys-1765 is required for activation by gamma-secretase cleavage, it promotes interaction with AAK1, which stabilizes it. Deubiquitination by EIF3F is necessary for nuclear import of activated Notch. In terms of processing, hydroxylated at Asn-1961 by HIF1AN. Hydroxylated at Asn-2028 by HIF1AN. Hydroxylation reduces affinity for HI1AN and may thus indirectly modulate negative regulation of NICD.

The protein localises to the cell membrane. It localises to the late endosome membrane. The protein resides in the nucleus. Functionally, functions as a receptor for membrane-bound ligands Jagged-1 (JAG1), Jagged-2 (JAG2) and Delta-1 (DLL1) to regulate cell-fate determination. Upon ligand activation through the released notch intracellular domain (NICD) it forms a transcriptional activator complex with RBPJ/RBPSUH and activates genes of the enhancer of split locus. Affects the implementation of differentiation, proliferation and apoptotic programs. Involved in angiogenesis; negatively regulates endothelial cell proliferation and migration and angiogenic sprouting. Involved in the maturation of both CD4(+) and CD8(+) cells in the thymus. Important for follicular differentiation and possibly cell fate selection within the follicle. During cerebellar development, functions as a receptor for neuronal DNER and is involved in the differentiation of Bergmann glia. Represses neuronal and myogenic differentiation. May play an essential role in postimplantation development, probably in some aspect of cell specification and/or differentiation. May be involved in mesoderm development, somite formation and neurogenesis. May enhance HIF1A function by sequestering HIF1AN away from HIF1A. Required for the THBS4 function in regulating protective astrogenesis from the subventricular zone (SVZ) niche after injury. Involved in determination of left/right symmetry by modulating the balance between motile and immotile (sensory) cilia at the left-right organiser (LRO). The polypeptide is Neurogenic locus notch homolog protein 1 (NOTCH1) (Cricetulus griseus (Chinese hamster)).